The following is a 394-amino-acid chain: Acetate kinase (394 aa).

Asparagine 7 is a Mg(2+) binding site. Residue lysine 14 participates in ATP binding. Substrate is bound at residue arginine 88. Aspartate 145 serves as the catalytic Proton donor/acceptor. ATP is bound by residues histidine 205–glycine 209, aspartate 279–arginine 281, and glycine 327–asparagine 331. Position 379 (glutamate 379) interacts with Mg(2+).

It belongs to the acetokinase family. In terms of assembly, homodimer. Requires Mg(2+) as cofactor. Mn(2+) is required as a cofactor.

Its subcellular location is the cytoplasm. It catalyses the reaction acetate + ATP = acetyl phosphate + ADP. The protein operates within metabolic intermediate biosynthesis; acetyl-CoA biosynthesis; acetyl-CoA from acetate: step 1/2. Functionally, catalyzes the formation of acetyl phosphate from acetate and ATP. Can also catalyze the reverse reaction. The chain is Acetate kinase from Campylobacter lari (strain RM2100 / D67 / ATCC BAA-1060).